A 272-amino-acid polypeptide reads, in one-letter code: uncharacterized protein (272 aa).

Residues aspartate 71 and glutamate 163 contribute to the active site.

The protein belongs to the glycosyl hydrolase 25 family.

This is an uncharacterized protein from Escherichia coli O6:H1 (strain CFT073 / ATCC 700928 / UPEC).